Here is a 283-residue protein sequence, read N- to C-terminus: Nucleoid occlusion protein (283 aa).

Positions 148–167 (EALAQRLGKGQSTIANKLRL) form a DNA-binding region, H-T-H motif.

It belongs to the ParB family.

The protein resides in the cytoplasm. The protein localises to the nucleoid. Effects nucleoid occlusion by binding relatively nonspecifically to DNA and preventing the assembly of the division machinery in the vicinity of the nucleoid, especially under conditions that disturb the cell cycle. It helps to coordinate cell division and chromosome segregation by preventing the formation of the Z ring through the nucleoid, which would cause chromosome breakage. This is Nucleoid occlusion protein from Bacillus licheniformis (strain ATCC 14580 / DSM 13 / JCM 2505 / CCUG 7422 / NBRC 12200 / NCIMB 9375 / NCTC 10341 / NRRL NRS-1264 / Gibson 46).